Consider the following 221-residue polypeptide: Oxaloacetate tautomerase FAHD1, mitochondrial (221 aa).

The N-terminal 24 residues, 1-24 (MAASRPLSRFWEWGKNIVCVGRNY), are a transit peptide targeting the mitochondrion. The residue at position 37 (Ser37) is a Phosphoserine. Mg(2+)-binding residues include Glu68, Glu70, and Asp99. Position 110 is an N6-acetyllysine (Lys110). At Lys112 the chain carries N6-succinyllysine.

It belongs to the FAH family. As to quaternary structure, homodimer. The cofactor is Mg(2+). Mn(2+) is required as a cofactor.

It localises to the mitochondrion. The protein resides in the cytoplasm. It is found in the cytosol. The enzyme catalyses oxaloacetate = enol-oxaloacetate. The catalysed reaction is oxaloacetate + H(+) = pyruvate + CO2. It catalyses the reaction a 3-acylpyruvate + H2O = a carboxylate + pyruvate + H(+). It carries out the reaction acetylpyruvate + H2O = acetate + pyruvate + H(+). The enzyme catalyses 3-fumarylpyruvate + H2O = fumarate + pyruvate + H(+). Oxaloacetate decarboxylation is competitively inhibited by oxalate. Functionally, tautomerase that converts enol-oxaloacetate, a strong inhibitor of succinate dehydrogenase, to the physiological keto form of oxaloacetate. It is thereby required to maximize aerobic respiration efficiency by preventing succinate dehydrogenase inhibition. Also acts as a weak oxaloacetate decarboxylase (ODx), catalyzing the decarboxylation of oxaloacetate (OAA) to pyruvate and CO(2), and as such is likely a regulatory enzyme in the TCA cycle. Also displays acylpyruvase activity, being able to hydrolyze acetylpyruvate and fumarylpyruvate in vitro. In Bos taurus (Bovine), this protein is Oxaloacetate tautomerase FAHD1, mitochondrial.